A 496-amino-acid polypeptide reads, in one-letter code: Probable cytosol aminopeptidase (496 aa).

Residues Lys-266 and Asp-271 each coordinate Mn(2+). Residue Lys-278 is part of the active site. The Mn(2+) site is built by Asp-289, Asp-348, and Glu-350. Arg-352 is an active-site residue.

Belongs to the peptidase M17 family. It depends on Mn(2+) as a cofactor.

Its subcellular location is the cytoplasm. The catalysed reaction is Release of an N-terminal amino acid, Xaa-|-Yaa-, in which Xaa is preferably Leu, but may be other amino acids including Pro although not Arg or Lys, and Yaa may be Pro. Amino acid amides and methyl esters are also readily hydrolyzed, but rates on arylamides are exceedingly low.. It carries out the reaction Release of an N-terminal amino acid, preferentially leucine, but not glutamic or aspartic acids.. Functionally, presumably involved in the processing and regular turnover of intracellular proteins. Catalyzes the removal of unsubstituted N-terminal amino acids from various peptides. This Pseudomonas fluorescens (strain Pf0-1) protein is Probable cytosol aminopeptidase.